We begin with the raw amino-acid sequence, 180 residues long: Membrane protein UL121 (180 aa).

The N-terminal stretch at 1–27 (MWGCGWSRILVLLLLMCMALMARGTYG) is a signal peptide. A helical membrane pass occupies residues 143-163 (LGLLYAVCLILSFSIVTAALW).

It belongs to the HHV-5 UL121 protein family.

Its subcellular location is the host membrane. The chain is Membrane protein UL121 (UL121) from Human cytomegalovirus (strain Merlin) (HHV-5).